The chain runs to 109 residues: Thiosulfate sulfurtransferase GlpE (109 aa).

The Rhodanese domain maps to 17–105 (KEGKTALVDI…WARSYPQDIT (89 aa)). Residue Cys-65 is the Cysteine persulfide intermediate of the active site.

The protein belongs to the GlpE family.

The protein resides in the cytoplasm. The catalysed reaction is thiosulfate + hydrogen cyanide = thiocyanate + sulfite + 2 H(+). The enzyme catalyses thiosulfate + [thioredoxin]-dithiol = [thioredoxin]-disulfide + hydrogen sulfide + sulfite + 2 H(+). Functionally, transferase that catalyzes the transfer of sulfur from thiosulfate to thiophilic acceptors such as cyanide or dithiols. May function in a CysM-independent thiosulfate assimilation pathway by catalyzing the conversion of thiosulfate to sulfite, which can then be used for L-cysteine biosynthesis. In Yersinia pestis, this protein is Thiosulfate sulfurtransferase GlpE.